Consider the following 228-residue polypeptide: LOB domain-containing protein 30 (228 aa).

Residues 16–118 (GPCGACKFLR…TELSYLQAHL (103 aa)) form the LOB domain. A disordered region spans residues 188-228 (SNMGGGGELQALAREFIHGGQMPAQPSPGTSGSASSVIKRE). Over residues 214-228 (SPGTSGSASSVIKRE) the composition is skewed to polar residues.

It belongs to the LOB domain-containing protein family. As to expression, expressed in roots, stems, leaves and flowers. Expressed in vascular tissues of hypocotyls, leaves, roots, developing floral organs and siliques.

Its function is as follows. Involved in the positive regulation of tracheary element (TE) differentiation. Involved in a positive feedback loop that maintains or promotes NAC030/VND7 expression that regulates TE differentiation-related genes. The chain is LOB domain-containing protein 30 (LBD30) from Arabidopsis thaliana (Mouse-ear cress).